Consider the following 1444-residue polypeptide: Rho GTPase-activating protein 31 (1444 aa).

Residues 21 to 216 (CDLTEYLESS…FILNHVDQIF (196 aa)) enclose the Rho-GAP domain. Residue serine 272 is modified to Phosphoserine. Position 286 is a phosphothreonine (threonine 286). Residues serine 346, serine 349, and serine 387 each carry the phosphoserine modification. The segment at 398–427 (WGQEGMPPGAEGGFDVSSDRSHLQGAQARP) is disordered. Phosphoserine is present on serine 476. The disordered stretch occupies residues 504–631 (TNSTPCRTPP…ESSTLQESPR (128 aa)). Residues 515–534 (ELQSLSSLEEFSFHGSESGG) show a composition bias toward low complexity. Positions 600–619 (NELEKRPNPEKVVEEGREAG) are enriched in basic and acidic residues. Phosphothreonine is present on threonine 679. 2 disordered regions span residues 688-893 (SSLG…EDDT) and 906-1108 (EPWE…SSLN). Phosphoserine occurs at positions 701 and 712. The segment covering 722 to 734 (PANQSTQGASTAA) has biased composition (polar residues). Positions 735 to 745 (SREKPEPEQGL) are enriched in basic and acidic residues. Residues 777–790 (LSPPLPPAPPPPTP) show a composition bias toward pro residues. A Phosphoserine modification is found at serine 778. Threonine 789 bears the Phosphothreonine mark. The segment covering 803 to 817 (GPEREDSSRKLRTDL) has biased composition (basic and acidic residues). Over residues 822 to 834 (LKSQDSPEISSLC) the composition is skewed to polar residues. Over residues 839–848 (ATPRHSDKQN) the composition is skewed to basic and acidic residues. Positions 960–977 (TVKSQWTLEVPSSSSCAN) are enriched in polar residues. Position 974 is a phosphoserine (serine 974). The segment covering 992–1008 (PRREITGWDEKALRSFR) has biased composition (basic and acidic residues). Residues 1028 to 1038 (VQPNPAETSPI) show a composition bias toward polar residues. A compositionally biased stretch (low complexity) spans 1064–1075 (GPESSKESSPSV). Residues serine 1105, serine 1106, and serine 1178 each carry the phosphoserine modification. Composition is skewed to polar residues over residues 1211–1224 (QIPQPLPSQSSGEN) and 1234–1245 (EGPSSTSGTTQK). The tract at residues 1211–1346 (QIPQPLPSQS…HRSRPGRPQS (136 aa)) is disordered. Over residues 1246–1265 (PAKDDSPSSLESSKEEKPKQ) the composition is skewed to basic and acidic residues. Polar residues-rich tracts occupy residues 1292 to 1303 (PGSSNLLSTQDA) and 1314 to 1323 (TEPSGDNLLS).

As to quaternary structure, interacts with ITSN1, which inhibits GAP activity. Interacts with PARVA. Interacts with GTP-loaded RHOU. Phosphorylation on Thr-789 reduces GAP activity.

It is found in the cell projection. It localises to the lamellipodium. Its subcellular location is the cell junction. The protein resides in the focal adhesion. Functionally, functions as a GTPase-activating protein (GAP) for RAC1 and CDC42. Required for cell spreading, polarized lamellipodia formation and cell migration. The polypeptide is Rho GTPase-activating protein 31 (ARHGAP31) (Homo sapiens (Human)).